Consider the following 199-residue polypeptide: Elongation factor Ts (199 aa).

An involved in Mg(2+) ion dislocation from EF-Tu region spans residues 82–85 (TDFV).

The protein belongs to the EF-Ts family.

The protein localises to the cytoplasm. Associates with the EF-Tu.GDP complex and induces the exchange of GDP to GTP. It remains bound to the aminoacyl-tRNA.EF-Tu.GTP complex up to the GTP hydrolysis stage on the ribosome. The polypeptide is Elongation factor Ts (Leptospira interrogans serogroup Icterohaemorrhagiae serovar copenhageni (strain Fiocruz L1-130)).